The sequence spans 486 residues: Small ribosomal subunit protein uS17B (486 aa).

The tract at residues 1-112 (MRDIGINGIK…IENKSNINFV (112 aa)) is 30S ribosomal protein S17. Residues 113 to 486 (DNLLNVDDKW…ELWTRKNYKS (374 aa)) form a unknown region.

This sequence belongs to the universal ribosomal protein uS17 family. In terms of assembly, part of the 30S ribosomal subunit.

In terms of biological role, one of the primary rRNA binding proteins, it binds specifically to the 5'-end of 16S ribosomal RNA. The protein is Small ribosomal subunit protein uS17B of Methanosarcina acetivorans (strain ATCC 35395 / DSM 2834 / JCM 12185 / C2A).